The primary structure comprises 440 residues: Chromosomal replication initiator protein DnaA (440 aa).

The tract at residues 1–69 (MKERILQEIK…VKVVLGNDAT (69 aa)) is domain I, interacts with DnaA modulators. Positions 69-96 (TFEITYEAFEPHSSYSEPLVKKRAVLLT) are domain II. The domain III, AAA+ region stretch occupies residues 97–313 (PLNPDYTFEN…GAIIKLLVYK (217 aa)). G140, G142, K143, and T144 together coordinate ATP. Residues 314–440 (ETTGKEVDLR…GEISKRALSG (127 aa)) are domain IV, binds dsDNA.

It belongs to the DnaA family. As to quaternary structure, oligomerizes as a right-handed, spiral filament on DNA at oriC.

Its subcellular location is the cytoplasm. Functionally, plays an essential role in the initiation and regulation of chromosomal replication. ATP-DnaA binds to the origin of replication (oriC) to initiate formation of the DNA replication initiation complex once per cell cycle. Binds the DnaA box (a 9 base pair repeat at the origin) and separates the double-stranded (ds)DNA. Forms a right-handed helical filament on oriC DNA; dsDNA binds to the exterior of the filament while single-stranded (ss)DNA is stabiized in the filament's interior. The ATP-DnaA-oriC complex binds and stabilizes one strand of the AT-rich DNA unwinding element (DUE), permitting loading of DNA polymerase. After initiation quickly degrades to an ADP-DnaA complex that is not apt for DNA replication. Binds acidic phospholipids. This Thermotoga petrophila (strain ATCC BAA-488 / DSM 13995 / JCM 10881 / RKU-1) protein is Chromosomal replication initiator protein DnaA.